The sequence spans 365 residues: Probable caffeine synthase 4 (365 aa).

Residue Y18 participates in S-adenosyl-L-homocysteine binding. T25 contacts caffeine. The S-adenosyl-L-homocysteine site is built by C61, N66, D98, L99, S134, and F135. Y152, H155, and W156 together coordinate caffeine. Mg(2+) is bound by residues N173, D259, F261, and N262. Caffeine is bound at residue F317.

It belongs to the methyltransferase superfamily. Type-7 methyltransferase family. It depends on Mg(2+) as a cofactor.

It functions in the pathway alkaloid biosynthesis. Its function is as follows. May be involved in the biosynthesis of caffeine. The polypeptide is Probable caffeine synthase 4 (Camellia sinensis (Tea plant)).